A 656-amino-acid polypeptide reads, in one-letter code: UvrABC system protein B (656 aa).

Positions 24–409 (QGVRNRTPSQ…QGHIVEQILR (386 aa)) constitute a Helicase ATP-binding domain. 37–44 (GTTGSGKT) provides a ligand contact to ATP. Positions 90 to 113 (YYDYYQPEAYIARNDTYIEKSLLI) match the Beta-hairpin motif. Residues 426-589 (QVDDLLEEIR…ITPKPIIKAI (164 aa)) enclose the Helicase C-terminal domain. Residues 616-651 (EKLIKKYENLMLQAANAFRFDEAAQYRDKMKAAKEQ) form the UVR domain.

This sequence belongs to the UvrB family. As to quaternary structure, forms a heterotetramer with UvrA during the search for lesions. Interacts with UvrC in an incision complex.

The protein resides in the cytoplasm. The UvrABC repair system catalyzes the recognition and processing of DNA lesions. A damage recognition complex composed of 2 UvrA and 2 UvrB subunits scans DNA for abnormalities. Upon binding of the UvrA(2)B(2) complex to a putative damaged site, the DNA wraps around one UvrB monomer. DNA wrap is dependent on ATP binding by UvrB and probably causes local melting of the DNA helix, facilitating insertion of UvrB beta-hairpin between the DNA strands. Then UvrB probes one DNA strand for the presence of a lesion. If a lesion is found the UvrA subunits dissociate and the UvrB-DNA preincision complex is formed. This complex is subsequently bound by UvrC and the second UvrB is released. If no lesion is found, the DNA wraps around the other UvrB subunit that will check the other stand for damage. In Chlamydia abortus (strain DSM 27085 / S26/3) (Chlamydophila abortus), this protein is UvrABC system protein B.